Consider the following 171-residue polypeptide: Lipoprotein signal peptidase (171 aa).

A run of 3 helical transmembrane segments spans residues 12–32, 67–87, and 93–113; these read WYWV…WVLA, WQRW…TVWL, and SLLK…GNLV. Catalysis depends on residues aspartate 123 and aspartate 141. A helical transmembrane segment spans residues 137–157; it reads FNIADSAICIGAVLIIWDAFL.

The protein belongs to the peptidase A8 family.

It is found in the cell inner membrane. The catalysed reaction is Release of signal peptides from bacterial membrane prolipoproteins. Hydrolyzes -Xaa-Yaa-Zaa-|-(S,diacylglyceryl)Cys-, in which Xaa is hydrophobic (preferably Leu), and Yaa (Ala or Ser) and Zaa (Gly or Ala) have small, neutral side chains.. It functions in the pathway protein modification; lipoprotein biosynthesis (signal peptide cleavage). This protein specifically catalyzes the removal of signal peptides from prolipoproteins. The sequence is that of Lipoprotein signal peptidase from Shewanella baltica (strain OS195).